We begin with the raw amino-acid sequence, 82 residues long: Putative membrane protein insertion efficiency factor (82 aa).

Belongs to the UPF0161 family.

Its subcellular location is the cell inner membrane. Its function is as follows. Could be involved in insertion of integral membrane proteins into the membrane. This chain is Putative membrane protein insertion efficiency factor, found in Francisella tularensis subsp. novicida (strain U112).